A 394-amino-acid polypeptide reads, in one-letter code: uncharacterized protein (394 aa).

The F-box domain maps to 7–51; the sequence is RKVIPNMPDLILRKIFDQYDYPVLCKMERVCRRWTNIINSKFRKE.

This is an uncharacterized protein from Caenorhabditis elegans.